A 501-amino-acid polypeptide reads, in one-letter code: Beta-glucosidase 25 (501 aa).

Residues Met-1 to Ala-19 form the signal peptide. Gln-39 provides a ligand contact to a beta-D-glucoside. An N-linked (GlcNAc...) asparagine glycan is attached at Asn-107. A beta-D-glucoside is bound by residues His-140 and Asn-185–Glu-186. Catalysis depends on Glu-186, which acts as the Proton donor. Cys-205 and Cys-213 are disulfide-bonded. Residues Tyr-329, Glu-402, Trp-452, Glu-459 to Trp-460, and Phe-468 each bind a beta-D-glucoside. Residue Glu-402 is the Nucleophile of the active site. A glycan (N-linked (GlcNAc...) asparagine) is linked at Asn-478.

The protein belongs to the glycosyl hydrolase 1 family.

The enzyme catalyses Hydrolysis of terminal, non-reducing beta-D-glucosyl residues with release of beta-D-glucose.. The sequence is that of Beta-glucosidase 25 (BGLU25) from Oryza sativa subsp. japonica (Rice).